A 353-amino-acid chain; its full sequence is MLPSLQSLSKKVLAKQCIPVDQYHILKCCGLWWYDGPITFYTYRNKMFIKSTCFSEGIELNTVLMKAAKENNHDLIRLFVEWGADINYGLVCAHSEHTRNLCRELGAKDRLDREYILKIFFDTTRNKTDSNIILCHEMFSNNPNLKHVDDLDLREEIMWELRGLMEITYMLDHDNSFSNMLTKYWYAIAVDYGLKKAIHYFYQKYTHLHRWRLMCALFYNNVFDLHELYEIERVRMDIDEMMHIACIQDYSYSAIYYCFIMGANINQAMFVSIQNYNLGNMFFCIDLGANAFEEGKTLAIQKENYLIADALSLKHYNPVISLLSAVTDPEKINSMLKNYHSKNMVVFLDYERR.

One copy of the ANK repeat lies at 59–88 (ELNTVLMKAAKENNHDLIRLFVEWGADINY).

The protein belongs to the asfivirus MGF 360 family. As to quaternary structure, interacts with host TBK1 ad IRF7.

Functionally, plays a role in virus cell tropism, and may be required for efficient virus replication in macrophages. In addition, inhibits the phosphorylation of host TBK1 and IRF7 and thereby negatively regulates the host cGAS signaling pathway and antagonizes IFN-mediated antiviral activity. The sequence is that of Protein MGF 360-11L from African swine fever virus (isolate Pig/Kenya/KEN-50/1950) (ASFV).